The chain runs to 782 residues: Sulfate permease family protein 3 (782 aa).

12 helical membrane-spanning segments follow: residues 30-52 (YACS…TWLP), 64-84 (LSGG…LASI), 86-106 (GVPP…YIFF), 113-133 (ALGG…KVML), 196-216 (IHVA…MGVF), 232-252 (GFVV…MLGI), 274-294 (LDNV…FLVF), 302-322 (WLNS…VVGI), 359-379 (HIGL…ITVA), 398-418 (ALGF…TSGF), 433-453 (LTCL…GPAL), and 497-517 (FFLT…GFAV). The 155-residue stretch at 546-700 (KRDLERIQGN…NKVGDAVKAA (155 aa)) folds into the STAS domain. Residues 728–742 (IDEESSDSNDNDDAE) are compositionally biased toward acidic residues. Residues 728-782 (IDEESSDSNDNDDAEIQERITEESENSEEVMSETSVSIEDATSLTSSRNSINSEE) form a disordered region. Over residues 767–782 (DATSLTSSRNSINSEE) the composition is skewed to polar residues.

It belongs to the SLC26A/SulP transporter (TC 2.A.53) family.

The protein localises to the membrane. Functionally, possible sulfate transporter. This Caenorhabditis elegans protein is Sulfate permease family protein 3 (sulp-3).